The chain runs to 597 residues: Elongation factor 4 (597 aa).

The 183-residue stretch at 2 to 184 (DHIRNFSIIA…ALVAKVPPPK (183 aa)) folds into the tr-type G domain. GTP-binding positions include 14–19 (DHGKST) and 131–134 (NKID).

This sequence belongs to the TRAFAC class translation factor GTPase superfamily. Classic translation factor GTPase family. LepA subfamily.

It localises to the cell inner membrane. The catalysed reaction is GTP + H2O = GDP + phosphate + H(+). Functionally, required for accurate and efficient protein synthesis under certain stress conditions. May act as a fidelity factor of the translation reaction, by catalyzing a one-codon backward translocation of tRNAs on improperly translocated ribosomes. Back-translocation proceeds from a post-translocation (POST) complex to a pre-translocation (PRE) complex, thus giving elongation factor G a second chance to translocate the tRNAs correctly. Binds to ribosomes in a GTP-dependent manner. This is Elongation factor 4 from Paraburkholderia phytofirmans (strain DSM 17436 / LMG 22146 / PsJN) (Burkholderia phytofirmans).